Here is a 629-residue protein sequence, read N- to C-terminus: tRNA uridine 5-carboxymethylaminomethyl modification enzyme MnmG (629 aa).

FAD-binding positions include 13 to 18, Val125, and Ser180; that span reads GGGHAG. NAD(+) is bound at residue 273-287; the sequence is GPRYCPSIEDKVMRF. Position 370 (Gln370) interacts with FAD.

This sequence belongs to the MnmG family. Homodimer. Heterotetramer of two MnmE and two MnmG subunits. It depends on FAD as a cofactor.

It localises to the cytoplasm. Its function is as follows. NAD-binding protein involved in the addition of a carboxymethylaminomethyl (cmnm) group at the wobble position (U34) of certain tRNAs, forming tRNA-cmnm(5)s(2)U34. The sequence is that of tRNA uridine 5-carboxymethylaminomethyl modification enzyme MnmG from Photobacterium profundum (strain SS9).